A 600-amino-acid chain; its full sequence is Beta-hexosaminidase (600 aa).

A signal peptide spans 1–18; that stretch reads MRISQICTVLSTVTSAVA. The propeptide occupies 19-96; it reads VGVNPLPAPR…PFPTPTAGAS (78 aa). Residue Thr-78 is glycosylated (O-linked (Man...) threonine). O-linked (Man...) serine glycosylation is found at Ser-83 and Ser-84. Residues Asp-222 and His-275 each act as charge relay system in the active site. A disulfide bond links Cys-290 and Cys-351. An N-linked (HexNAc...) asparagine glycan is attached at Asn-318. Glu-346 (charge relay system) is an active-site residue. The N-linked (GlcNAc...) asparagine glycan is linked to Asn-353. N-linked (HexNAc...) asparagine glycosylation is present at Asn-387. A glycan (N-linked (GlcNAc...) asparagine) is linked at Asn-428. The cysteines at positions 448 and 483 are disulfide-linked. N-linked (GlcNAc...) asparagine glycosylation is found at Asn-500 and Asn-525. Cys-583 and Cys-590 are joined by a disulfide.

This sequence belongs to the glycosyl hydrolase 20 family. Homodimer. Oligosaccharide moieties may also take part in the dimerization. Dimerization is a pH-dependent reversible process. The individual catalytic cores dimerize and the catalytic core of one subunit in the active dimer interacts with the propeptide of the second subunit. Post-translationally, the precursor of the propeptide is intracellularly processed in the endoplasmic reticulum by a dibasic peptidase, different from Kex2, removing Lys-97--Arg-101 from the precursor producing the activated propeptide. The propeptide binds non-covalently to the catalytic domain. Propeptide binding is necessary for full activation of the enzyme, dimerization of the catalytic domain and secretion of the active enzyme. O-glycosylated. O-glycosylation (O-mannosylation) at the C-terminus of the propeptide is necessary for full enzyme activity. N-glycosylated. N-glycosylation of the catalytic domain increases the stability and solubility of the enzyme, especially at low pH. Contains high mannose-type (M4-M11) N-glycans at the C-terminus. N-glycan deglycosylation does not affect enzyme activity.

The protein resides in the secreted. It carries out the reaction Hydrolysis of terminal non-reducing N-acetyl-D-hexosamine residues in N-acetyl-beta-D-hexosaminides.. Its activity is regulated as follows. Activated by non-covalent binding of the propeptide to the catalytic domain. The concentration of the propeptide is regulated in the endoplasmic reticulum and the propeptide thus regulates the amount of the active enzyme at various stages of the growth cycle. The dimeric enzyme has about half of the maximal activity in the presence of one bound propeptide, but is fully active with two bound O-glycosylated propeptides. Inhibited by N-acetylglucosamine (NAG)-thiazoline. Functionally, selectively hydrolyzes GlcNAcbeta(1-&gt;4)GlcNAc (N,N'-diacetylchitobiose) and Gal-NAcbeta(1-&gt;4)GlcNAc, but not their C-2 epimers GlcNAcbeta(1-&gt;4)ManNAc or Gal-NAcbeta(1-&gt;4)ManNAc. However, hydrolyzes both GlcNAcbeta(1-&gt;6)GlcNAc and GlcNAcbeta(1-&gt;6)ManNAc. Part of the binary chitinolytic system. Involved in hydrolysis of chitobiose and higher chito-oligomers (produced from cell wall chitin by endochitinases), thus contributing to the formation of germ tubes, fruit-bodies and septa during hyphenation. Hydrolyzes synthetic substrate p-nitrophenyl-beta-N-acetyl-D-glucosaminide (pNP-GlcNAc). Hydrolyzes synthetic substrate p-nitrophenyl-beta-N-acetyl-D-galactosaminide (pNP-GalNAc). Hydrolyzes chromogenic substrate 4-nitrophenyl-2-acetamido-2-deoxyglucopyranoside. The sequence is that of Beta-hexosaminidase from Aspergillus oryzae (Yellow koji mold).